Reading from the N-terminus, the 185-residue chain is Nodulin-20 (185 aa).

The first 17 residues, 1-17, serve as a signal peptide directing secretion; that stretch reads MRVVLITLFLFIGAAVA.

It belongs to the nodulin 20 family.

The protein resides in the symbiosome. Its subcellular location is the peribacteroid membrane. The protein localises to the peribacteroid space. In Glycine max (Soybean), this protein is Nodulin-20.